The following is a 248-amino-acid chain: Biosynthetic peptidoglycan transglycosylase (248 aa).

A helical membrane pass occupies residues 20 to 42 (WLRWLMAAPLLFAAASVLQVLIL).

Belongs to the glycosyltransferase 51 family.

The protein localises to the cell inner membrane. The catalysed reaction is [GlcNAc-(1-&gt;4)-Mur2Ac(oyl-L-Ala-gamma-D-Glu-L-Lys-D-Ala-D-Ala)](n)-di-trans,octa-cis-undecaprenyl diphosphate + beta-D-GlcNAc-(1-&gt;4)-Mur2Ac(oyl-L-Ala-gamma-D-Glu-L-Lys-D-Ala-D-Ala)-di-trans,octa-cis-undecaprenyl diphosphate = [GlcNAc-(1-&gt;4)-Mur2Ac(oyl-L-Ala-gamma-D-Glu-L-Lys-D-Ala-D-Ala)](n+1)-di-trans,octa-cis-undecaprenyl diphosphate + di-trans,octa-cis-undecaprenyl diphosphate + H(+). It participates in cell wall biogenesis; peptidoglycan biosynthesis. Peptidoglycan polymerase that catalyzes glycan chain elongation from lipid-linked precursors. In Xanthomonas euvesicatoria pv. vesicatoria (strain 85-10) (Xanthomonas campestris pv. vesicatoria), this protein is Biosynthetic peptidoglycan transglycosylase.